Reading from the N-terminus, the 583-residue chain is Propane 2-monooxygenase operon transcriptional activator MimR (583 aa).

Residues 320-513 enclose the Sigma-54 factor interaction domain; that stretch reads LAGRSSSFRR…LRHVLTETLR (194 aa). ATP contacts are provided by residues 348 to 355 and 395 to 404; these read GEKGSGRT and DADFAVIVAD.

Functionally, acts as a transcriptional activator of the mimABCD operon encoding the propane 2-monooxygenase complex. This is Propane 2-monooxygenase operon transcriptional activator MimR from Mycolicibacterium goodii (Mycobacterium goodii).